We begin with the raw amino-acid sequence, 157 residues long: UPF0262 protein RHECIAT_CH0000657 (157 aa).

The protein belongs to the UPF0262 family.

This is UPF0262 protein RHECIAT_CH0000657 from Rhizobium etli (strain CIAT 652).